A 2628-amino-acid polypeptide reads, in one-letter code: Protein FMP27, mitochondrial (2628 aa).

Residues 1–28 (MMFPINVLLYKWLIFAVTFLWSCKILLR) form the signal peptide. The segment at 29–192 (KLLGINITWI…NTNLLIGEIM (164 aa)) is transmembrane domain. 9 LRR repeats span residues 160 to 182 (FDSFLRKLLWNGQTIIADAIFIV), 213 to 236 (PMNLLNLFINKENVDLMSNEKLLQ), 271 to 296 (IKPLKEMNVTVDKLQIKDFPLTNHPE), 306 to 333 (YNVLVSNINFNTNRFRNEMPGYTLIFEE), 571 to 596 (NADIDTLMLDLSELPTMVMLSELVHN), 835 to 857 (VVSLMSIFLAVSGIHTLNQIFGH), 1944 to 1967 (FDSLNLLKNTKKTLKQFEHRFFIF), 2101 to 2125 (FFMLKTLEFDANTTSNTYMQDIFLK), and 2303 to 2327 (IGKLDLSNIHNERMHQLLRLYILRK).

It is found in the cell membrane. It localises to the endoplasmic reticulum membrane. The protein localises to the mitochondrion membrane. Its function is as follows. Tube-forming lipid transport protein which binds to phosphatidylinositols and affects phosphatidylinositol-4,5-bisphosphate (PtdIns-4,5-P2) distribution. In Saccharomyces cerevisiae (strain ATCC 204508 / S288c) (Baker's yeast), this protein is Protein FMP27, mitochondrial.